The chain runs to 328 residues: tRNA uridine(34) hydroxylase (328 aa).

The Rhodanese domain maps to 130–224 (LDKDTVVLDT…YGKDPEVQGE (95 aa)). Cys184 acts as the Cysteine persulfide intermediate in catalysis.

Belongs to the TrhO family.

The catalysed reaction is uridine(34) in tRNA + AH2 + O2 = 5-hydroxyuridine(34) in tRNA + A + H2O. Functionally, catalyzes oxygen-dependent 5-hydroxyuridine (ho5U) modification at position 34 in tRNAs. The polypeptide is tRNA uridine(34) hydroxylase (Streptococcus pneumoniae (strain Hungary19A-6)).